We begin with the raw amino-acid sequence, 398 residues long: Argininosuccinate lyase (398 aa).

Belongs to the lyase 1 family. Argininosuccinate lyase subfamily.

The protein localises to the cytoplasm. The catalysed reaction is 2-(N(omega)-L-arginino)succinate = fumarate + L-arginine. Its pathway is amino-acid biosynthesis; L-arginine biosynthesis; L-arginine from L-ornithine and carbamoyl phosphate: step 3/3. This Thermotoga neapolitana (strain ATCC 49049 / DSM 4359 / NBRC 107923 / NS-E) protein is Argininosuccinate lyase.